A 301-amino-acid polypeptide reads, in one-letter code: Transmembrane protein 178A (301 aa).

The N-terminal stretch at 1-25 is a signal peptide; that stretch reads MEKRALVTAISLSMSLLALMLLVTA. The Extracellular portion of the chain corresponds to 26 to 183; it reads IFTDHWYETD…LLHLRRITAG (158 aa). The N-linked (GlcNAc...) asparagine glycan is linked to N162. Residues 184 to 204 traverse the membrane as a helical segment; it reads FLGMAAAVMLCGSIVAAVGFF. At 205–215 the chain is on the cytoplasmic side; it reads WEESLTQHVSG. Residues 216-236 form a helical membrane-spanning segment; sequence LLFLMAGIFCTISLCTYAASV. The Extracellular portion of the chain corresponds to 237 to 258; it reads SYDLSRNPPFIYGLPSDVDHGY. Residues 259 to 279 form a helical membrane-spanning segment; the sequence is GWSIFCAWVSLGLTVASGCIC. Residues 280–301 are Cytoplasmic-facing; it reads TTYPFLSRTKALRSKTARESSV.

This sequence belongs to the TMEM178 family.

The protein localises to the endoplasmic reticulum membrane. Functionally, may act as a negative regulator of osteoclast differentiation. The protein is Transmembrane protein 178A (tmem178a) of Danio rerio (Zebrafish).